The following is a 284-amino-acid chain: Bifunctional protein FolD (284 aa).

NADP(+) is bound by residues 166-168 and I232; that span reads GAS.

This sequence belongs to the tetrahydrofolate dehydrogenase/cyclohydrolase family. As to quaternary structure, homodimer.

It catalyses the reaction (6R)-5,10-methylene-5,6,7,8-tetrahydrofolate + NADP(+) = (6R)-5,10-methenyltetrahydrofolate + NADPH. It carries out the reaction (6R)-5,10-methenyltetrahydrofolate + H2O = (6R)-10-formyltetrahydrofolate + H(+). Its pathway is one-carbon metabolism; tetrahydrofolate interconversion. Functionally, catalyzes the oxidation of 5,10-methylenetetrahydrofolate to 5,10-methenyltetrahydrofolate and then the hydrolysis of 5,10-methenyltetrahydrofolate to 10-formyltetrahydrofolate. This is Bifunctional protein FolD from Shewanella pealeana (strain ATCC 700345 / ANG-SQ1).